A 493-amino-acid polypeptide reads, in one-letter code: Vacuolar-processing enzyme (493 aa).

The signal sequence occupies residues 1–34; that stretch reads MAVHRSLLNKPTWCRVAFWWWMLVMVMRIQGTNG. Positions 35–53 are excised as a propeptide; sequence KEQDSVIKLPTQEVDAESD. H176 is a catalytic residue. Catalysis depends on C218, which acts as the Nucleophile. A disulfide bridge connects residues C251 and C265. An N-linked (GlcNAc...) asparagine glycan is attached at N318. 2 cysteine pairs are disulfide-bonded: C429-C459 and C441-C476.

This sequence belongs to the peptidase C13 family.

Its function is as follows. Asparagine-specific endopeptidase involved in the processing of vacuolar seed protein precursors into the mature forms. The polypeptide is Vacuolar-processing enzyme (Phaseolus vulgaris (Kidney bean)).